The chain runs to 874 residues: Alanine--tRNA ligase (874 aa).

Residues H564, H568, C665, and H669 each contribute to the Zn(2+) site.

It belongs to the class-II aminoacyl-tRNA synthetase family. Zn(2+) serves as cofactor.

Its subcellular location is the cytoplasm. It carries out the reaction tRNA(Ala) + L-alanine + ATP = L-alanyl-tRNA(Ala) + AMP + diphosphate. Its function is as follows. Catalyzes the attachment of alanine to tRNA(Ala) in a two-step reaction: alanine is first activated by ATP to form Ala-AMP and then transferred to the acceptor end of tRNA(Ala). Also edits incorrectly charged Ser-tRNA(Ala) and Gly-tRNA(Ala) via its editing domain. In Burkholderia pseudomallei (strain 668), this protein is Alanine--tRNA ligase.